Consider the following 197-residue polypeptide: UPF0301 protein Adeh_3962 (197 aa).

This sequence belongs to the UPF0301 (AlgH) family.

This chain is UPF0301 protein Adeh_3962, found in Anaeromyxobacter dehalogenans (strain 2CP-C).